The following is a 436-amino-acid chain: 3-ketoacyl-CoA thiolase (436 aa).

Cys99 acts as the Acyl-thioester intermediate in catalysis. Residues His392 and Cys422 each act as proton acceptor in the active site.

It belongs to the thiolase-like superfamily. Thiolase family. In terms of assembly, heterotetramer of two alpha chains (FadJ) and two beta chains (FadI).

Its subcellular location is the cytoplasm. The catalysed reaction is an acyl-CoA + acetyl-CoA = a 3-oxoacyl-CoA + CoA. It functions in the pathway lipid metabolism; fatty acid beta-oxidation. Functionally, catalyzes the final step of fatty acid oxidation in which acetyl-CoA is released and the CoA ester of a fatty acid two carbons shorter is formed. In Shewanella baltica (strain OS155 / ATCC BAA-1091), this protein is 3-ketoacyl-CoA thiolase.